A 754-amino-acid polypeptide reads, in one-letter code: Bifunctional sesterterpene synthase astC (754 aa).

A signal peptide spans 1–24; that stretch reads MASLEVFVLYLRIFFISFMSRARS. The tract at residues 58–388 is sesterterpene synthase; the sequence is IQYRHSKLVD…RYHFHKPEHW (331 aa). The Mg(2+) site is built by Asp149 and Asp153. A geranylfarnesyl diphosphate synthase region spans residues 389-753; the sequence is RQVENVDDDG…LRLLLKRLHV (365 aa). Positions 392-403 are enriched in basic and acidic residues; sequence ENVDDDGNKSDD. The disordered stretch occupies residues 392-414; that stretch reads ENVDDDGNKSDDSGIAMKDSPES. Asp512 and Asp516 together coordinate Mg(2+).

The protein in the N-terminal section; belongs to the terpene synthase family. It in the C-terminal section; belongs to the FPP/GGPP synthase family. Requires Mg(2+) as cofactor.

The enzyme catalyses (2E,6E,10E,14E)-geranylfarnesyl diphosphate = preasperterpenoid A + diphosphate. It functions in the pathway secondary metabolite biosynthesis; terpenoid biosynthesis. In terms of biological role, bifunctional sesterterpene synthase; part of the gene cluster that mediates the biosynthesis of the asperterpenoids, sesterterpenes that exhibit anti-tuberculosis activity. The first step of the pathway is performed by the sesterterpene synthase astC that possesses both prenyl transferase and terpene cyclase activity, converting isopentenyl diphosphate and dimethylallyl diphosphate into geranylfarnesyl diphosphate (GFPP) and further converting GFPP into preasperterpenoid A, respectively. The cytochrome P450 monooxygenase astB then dually oxidizes preasperterpenoid A to produce asperterpenoid A along with a minor product, asperterpenoid B. Finally, the cytochrome P450 monooxygenase astA converts asperterpenoid A into asperterpenoid C. This chain is Bifunctional sesterterpene synthase astC, found in Talaromyces wortmannii (Penicillium wortmannii).